We begin with the raw amino-acid sequence, 742 residues long: Zinc finger protein 700 (742 aa).

Residues 1–20 are disordered; it reads MPCCSHRSCREDPGTSESRE. A compositionally biased stretch (basic and acidic residues) spans 8–20; it reads SCREDPGTSESRE. The 81-residue stretch at 24–104 folds into the KRAB domain; the sequence is VAFEDVAVNF…KEDSHCGETF (81 aa). 9 C2H2-type zinc fingers span residues 194–216, 222–244, 250–272, 278–300, 306–328, 362–384, 390–412, 418–440, and 446–468; these read YACK…MVMH, YKCK…ERTH, YECK…ERTH, YECS…ERSH, YQCK…ERTH, YKCK…EKTH, YKCK…ERIH, YECK…GGTH, and YECK…GRTH. The C2H2-type 10; degenerate zinc-finger motif lies at 474-502; that stretch reads YECKECGKAFRYVKHLQIHERTEKHIRMP. 8 C2H2-type zinc fingers span residues 508–530, 536–558, 564–586, 592–614, 620–642, 648–670, 676–698, and 704–726; these read YKCS…EKTH, YECN…ERTH, YECK…ERTH, YECK…GRTH, YECK…ERKH, and YECK…ARTH.

This sequence belongs to the krueppel C2H2-type zinc-finger protein family.

The protein resides in the nucleus. May be involved in transcriptional regulation. The chain is Zinc finger protein 700 (ZNF700) from Homo sapiens (Human).